A 493-amino-acid polypeptide reads, in one-letter code: Dipeptide permease D (493 aa).

The next 13 membrane-spanning stretches (helical) occupy residues 14–34 (VVALQIWEYFSFYGMRALLIL), 49–69 (ELFSAYCSLVYVTPILGGYLA), 91–111 (LVLGASEIAPTFLYLSLAIIV), 138–158 (GGFSLLYAAGNIGSIVAPIAC), 167–187 (WAMGFALAAIGMLAGLVIFLC), 212–232 (NWGWLLILLVAAPLLITVLFW), 235–255 (WSVYALIVATAIGLVVLAKIY), 267–287 (LGLIVTLTLFSMLFWAFAQQG), 312–332 (MFQSVNAFAVMLCGVVLAWLV), 344–364 (IWGKFALGLGLMSAGFCILTL), 379–399 (LMVLGLAVMGFAELFIDPVAM), 413–433 (VLTGIYMLLSGAIANYLAGVI), and 458–478 (VFEQITWGALACVGVVLLIWL).

The protein belongs to the major facilitator superfamily. Proton-dependent oligopeptide transporter (POT/PTR) (TC 2.A.17) family. DtpD subfamily.

The protein resides in the cell inner membrane. Functionally, probable proton-dependent permease that transports dipeptides. This is Dipeptide permease D from Salmonella typhimurium (strain 14028s / SGSC 2262).